Consider the following 287-residue polypeptide: Myogenin (287 aa).

Phosphoserine; by CaMK2G is present on residues Ser-77 and Ser-79. Residues Asp-81–Leu-132 form the bHLH domain. Thr-87 carries the phosphothreonine; by CaMK2G modification.

Homodimer and heterodimer with E12; heterodimerization enhances MYOG DNA-binding and transcriptional activities. Interacts with SMARCA4/BRG1/BAF190A. Interacts (via C-terminal region) with SSRP1 and SUPT16H; the interaction is indicative of an interaction with the FACT complex. Interacts with CSRP3. In terms of processing, phosphorylated by CAMK2G on threonine and serine amino acids in a muscle activity-dependent manner. Phosphorylation of Thr-87 impairs both DNA-binding and trans-activation functions in contracting muscles. In terms of tissue distribution, expressed in muscle (at protein level).

Its subcellular location is the nucleus. In terms of biological role, acts as a transcriptional activator that promotes transcription of muscle-specific target genes and plays a role in muscle differentiation, cell cycle exit and muscle atrophy. Essential for the development of functional embryonic skeletal fiber muscle differentiation. However is dispensable for postnatal skeletal muscle growth; phosphorylation by CAMK2G inhibits its transcriptional activity in respons to muscle activity. Required for the recruitment of the FACT complex to muscle-specific promoter regions, thus promoting gene expression initiation. During terminal myoblast differentiation, plays a role as a strong activator of transcription at loci with an open chromatin structure previously initiated by MYOD1. Together with MYF5 and MYOD1, co-occupies muscle-specific gene promoter core regions during myogenesis. Also cooperates with myocyte-specific enhancer factor MEF2D and BRG1-dependent recruitment of SWI/SNF chromatin-remodeling enzymes to alter chromatin structure at myogenic late gene promoters. Facilitates cell cycle exit during terminal muscle differentiation through the up-regulation of miR-20a expression, which in turn represses genes involved in cell cycle progression. Binds to the E-box containing (E1) promoter region of the miR-20a gene. Also plays a role in preventing reversal of muscle cell differentiation. Contributes to the atrophy-related gene expression in adult denervated muscles. Induces fibroblasts to differentiate into myoblasts. The polypeptide is Myogenin (Myog) (Rattus norvegicus (Rat)).